The chain runs to 314 residues: DNA-directed RNA polymerase subunit alpha (314 aa).

The segment at M1 to T228 is alpha N-terminal domain (alpha-NTD). The segment at K245 to E314 is alpha C-terminal domain (alpha-CTD).

This sequence belongs to the RNA polymerase alpha chain family. In terms of assembly, homodimer. The RNAP catalytic core consists of 2 alpha, 1 beta, 1 beta' and 1 omega subunit. When a sigma factor is associated with the core the holoenzyme is formed, which can initiate transcription.

It carries out the reaction RNA(n) + a ribonucleoside 5'-triphosphate = RNA(n+1) + diphosphate. Functionally, DNA-dependent RNA polymerase catalyzes the transcription of DNA into RNA using the four ribonucleoside triphosphates as substrates. This is DNA-directed RNA polymerase subunit alpha from Halalkalibacterium halodurans (strain ATCC BAA-125 / DSM 18197 / FERM 7344 / JCM 9153 / C-125) (Bacillus halodurans).